A 518-amino-acid chain; its full sequence is Anthranilate synthase component 1 (518 aa).

L-tryptophan contacts are provided by residues Ser38 and 283-285 (PYM). 324-325 (GT) is a chorismate binding site. Residue Glu357 coordinates Mg(2+). Residues Tyr445, Arg465, 479–481 (GAG), and Gly481 each bind chorismate. Glu494 contacts Mg(2+).

The protein belongs to the anthranilate synthase component I family. In terms of assembly, heterotetramer consisting of two non-identical subunits: a beta subunit (TrpG) and a large alpha subunit (TrpE). Mg(2+) serves as cofactor.

It carries out the reaction chorismate + L-glutamine = anthranilate + pyruvate + L-glutamate + H(+). The protein operates within amino-acid biosynthesis; L-tryptophan biosynthesis; L-tryptophan from chorismate: step 1/5. Its activity is regulated as follows. Feedback inhibited by tryptophan. Its function is as follows. Part of a heterotetrameric complex that catalyzes the two-step biosynthesis of anthranilate, an intermediate in the biosynthesis of L-tryptophan. In the first step, the glutamine-binding beta subunit (TrpG) of anthranilate synthase (AS) provides the glutamine amidotransferase activity which generates ammonia as a substrate that, along with chorismate, is used in the second step, catalyzed by the large alpha subunit of AS (TrpE) to produce anthranilate. In the absence of TrpG, TrpE can synthesize anthranilate directly from chorismate and high concentrations of ammonia. This is Anthranilate synthase component 1 (trpE) from Corynebacterium glutamicum (strain ATCC 13032 / DSM 20300 / JCM 1318 / BCRC 11384 / CCUG 27702 / LMG 3730 / NBRC 12168 / NCIMB 10025 / NRRL B-2784 / 534).